Here is a 297-residue protein sequence, read N- to C-terminus: Protein BCCIP homolog (297 aa).

Positions 1–40 (MSANKQKKLSTMEVDPNEDVSSSSEDDDDDEPHPDAYKGN) are disordered.

Belongs to the BCP1 family.

The sequence is that of Protein BCCIP homolog from Drosophila melanogaster (Fruit fly).